Reading from the N-terminus, the 266-residue chain is Urease accessory protein UreD (266 aa).

Belongs to the UreD family. As to quaternary structure, ureD, UreF and UreG form a complex that acts as a GTP-hydrolysis-dependent molecular chaperone, activating the urease apoprotein by helping to assemble the nickel containing metallocenter of UreC. The UreE protein probably delivers the nickel.

It localises to the cytoplasm. Required for maturation of urease via the functional incorporation of the urease nickel metallocenter. The protein is Urease accessory protein UreD of Jannaschia sp. (strain CCS1).